The sequence spans 353 residues: Photosystem II D2 protein (353 aa).

Residues 41 to 61 (TAYLALGGWLTGTTFVTSWYT) traverse the membrane as a helical segment. Residue His-118 participates in chlorophyll a binding. The helical transmembrane segment at 125-141 (GFMLRQFEISRLVGIRP) threads the bilayer. Pheophytin a is bound by residues Gln-130 and Asn-143. Residues 153-166 (VFVSVFLMYPLGQS) form a helical membrane-spanning segment. His-198 contributes to the chlorophyll a binding site. The helical transmembrane segment at 208–228 (GALLCAIHGATVENTLYEDGE) threads the bilayer. Residues His-215 and Phe-262 each coordinate a plastoquinone. Fe cation is bound at residue His-215. Fe cation is bound at residue His-269. A helical transmembrane segment spans residues 279–295 (GLWTSSIGIIGLALNLR).

This sequence belongs to the reaction center PufL/M/PsbA/D family. As to quaternary structure, PSII is composed of 1 copy each of membrane proteins PsbA, PsbB, PsbC, PsbD, PsbE, PsbF, PsbH, PsbI, PsbJ, PsbK, PsbL, PsbM, PsbT, PsbX, PsbY, PsbZ, Psb30/Ycf12, peripheral proteins PsbO, CyanoQ (PsbQ), PsbU, PsbV and a large number of cofactors. It forms dimeric complexes. It depends on The D1/D2 heterodimer binds P680, chlorophylls that are the primary electron donor of PSII, and subsequent electron acceptors. It shares a non-heme iron and each subunit binds pheophytin, quinone, additional chlorophylls, carotenoids and lipids. There is also a Cl(-1) ion associated with D1 and D2, which is required for oxygen evolution. The PSII complex binds additional chlorophylls, carotenoids and specific lipids. as a cofactor.

The protein resides in the host cellular thylakoid membrane. The catalysed reaction is 2 a plastoquinone + 4 hnu + 2 H2O = 2 a plastoquinol + O2. In terms of biological role, photosystem II (PSII) is a light-driven water:plastoquinone oxidoreductase that uses light energy to abstract electrons from H(2)O, generating O(2) and a proton gradient subsequently used for ATP formation. It consists of a core antenna complex that captures photons, and an electron transfer chain that converts photonic excitation into a charge separation. The D1/D2 (PsbA/PsbD) reaction center heterodimer binds P680, the primary electron donor of PSII as well as several subsequent electron acceptors. D2 is needed for assembly of a stable PSII complex. This Synechococcus phage S-PM2 protein is Photosystem II D2 protein (psbD).